The following is a 121-amino-acid chain: Holin-like protein CidA (121 aa).

Helical transmembrane passes span 3–23 (WWKL…GEWI), 30–50 (PVPG…FNLV), 58–78 (GADF…VAVI), and 89–109 (IDLI…TGLL).

This sequence belongs to the CidA/LrgA family. CidA subfamily.

Its subcellular location is the cell membrane. In terms of biological role, increases the activity of extracellular murein hydrolases possibly by mediating their export via hole formation. Inhibited by the antiholin-like proteins LrgAB. In an unstressed cell, the LrgAB products probably inhibit the function of the CidA protein. When a cell is stressed by the addition of antibiotics or by other factors in the environment, CidA possibly oligomerizes within the bacterial cell membrane, creating lesions that disrupt the proton motive force, which in turn results in loss of cell viability. These lesions are also hypothesized to regulate the subsequent cell lysis by either allowing the murein hydrolases access to the cell wall substrate and/or regulating their activity by a possible change in the cell wall pH that results from loss of membrane potential. The polypeptide is Holin-like protein CidA (Bacillus cereus (strain ATCC 10987 / NRS 248)).